A 113-amino-acid polypeptide reads, in one-letter code: MTVARHAVSRLGLALASFLLFPLALAAAPAAERQATLDHLLLQDCGSCHGLRMTGGLGPALTREALAGKPRDSLIATVTHGRPGTAMPGWNALLDEQDIAYLVDRLLEGYPKP.

The N-terminal stretch at 1-26 (MTVARHAVSRLGLALASFLLFPLALA) is a signal peptide. Heme c-binding residues include cysteine 45, cysteine 48, and histidine 49.

Post-translationally, binds 1 heme c group covalently per subunit.

The protein resides in the periplasm. In terms of biological role, monoheme c-type cytochrome. The protein is Cytochrome c55X (nirC) of Stutzerimonas stutzeri (Pseudomonas stutzeri).